Here is a 368-residue protein sequence, read N- to C-terminus: Histidinol-phosphate aminotransferase (368 aa).

Lys229 carries the post-translational modification N6-(pyridoxal phosphate)lysine.

Belongs to the class-II pyridoxal-phosphate-dependent aminotransferase family. Histidinol-phosphate aminotransferase subfamily. Homodimer. Requires pyridoxal 5'-phosphate as cofactor.

It catalyses the reaction L-histidinol phosphate + 2-oxoglutarate = 3-(imidazol-4-yl)-2-oxopropyl phosphate + L-glutamate. The protein operates within amino-acid biosynthesis; L-histidine biosynthesis; L-histidine from 5-phospho-alpha-D-ribose 1-diphosphate: step 7/9. The protein is Histidinol-phosphate aminotransferase of Acidovorax ebreus (strain TPSY) (Diaphorobacter sp. (strain TPSY)).